Reading from the N-terminus, the 485-residue chain is UDP-N-acetylmuramate--L-alanine ligase (485 aa).

An ATP-binding site is contributed by 125-131 (GTHGKTT).

It belongs to the MurCDEF family.

The protein localises to the cytoplasm. The catalysed reaction is UDP-N-acetyl-alpha-D-muramate + L-alanine + ATP = UDP-N-acetyl-alpha-D-muramoyl-L-alanine + ADP + phosphate + H(+). It participates in cell wall biogenesis; peptidoglycan biosynthesis. Its function is as follows. Cell wall formation. The protein is UDP-N-acetylmuramate--L-alanine ligase of Stutzerimonas stutzeri (strain A1501) (Pseudomonas stutzeri).